The sequence spans 338 residues: Methionine import ATP-binding protein MetN 1 (338 aa).

In terms of domain architecture, ABC transporter spans 2–241; the sequence is IELHQVSKSF…AKHATTKRFV (240 aa). Position 38-45 (38-45) interacts with ATP; that stretch reads GYSGAGKS.

Belongs to the ABC transporter superfamily. Methionine importer (TC 3.A.1.24) family. In terms of assembly, the complex is composed of two ATP-binding proteins (MetN), two transmembrane proteins (MetI) and a solute-binding protein (MetQ).

The protein localises to the cell membrane. The enzyme catalyses L-methionine(out) + ATP + H2O = L-methionine(in) + ADP + phosphate + H(+). It catalyses the reaction D-methionine(out) + ATP + H2O = D-methionine(in) + ADP + phosphate + H(+). Part of the ABC transporter complex MetNIQ involved in methionine import. Responsible for energy coupling to the transport system. The sequence is that of Methionine import ATP-binding protein MetN 1 from Listeria monocytogenes serovar 1/2a (strain ATCC BAA-679 / EGD-e).